Reading from the N-terminus, the 254-residue chain is 2-dehydro-3-deoxy-D-gluconate 5-dehydrogenase (254 aa).

Position 16-40 (16-40 (LVTGPGTGIGQGIAKALAGAGADII)) interacts with NAD(+). Position 146 (serine 146) interacts with substrate. The active-site Proton acceptor is tyrosine 159.

This sequence belongs to the short-chain dehydrogenases/reductases (SDR) family.

The catalysed reaction is 2-dehydro-3-deoxy-D-gluconate + NAD(+) = 3-deoxy-D-glycero-2,5-hexodiulosonate + NADH + H(+). Its pathway is glycan metabolism; pectin degradation; 2-dehydro-3-deoxy-D-gluconate from pectin: step 5/5. Functionally, catalyzes the reduction of 2,5-diketo-3-deoxygluconate (DKII or 4,6-dihydroxy-2,5-dioxohexanoate) into 2-keto-3-deoxygluconate (KDG or 2-dehydro-3-deoxygluconate) with a concomitant oxidation of NADH. In Bacillus subtilis (strain 168), this protein is 2-dehydro-3-deoxy-D-gluconate 5-dehydrogenase (kduD).